The primary structure comprises 566 residues: E3 ubiquitin-protein ligase RNF220 (566 aa).

K277 participates in a covalent cross-link: Glycyl lysine isopeptide (Lys-Gly) (interchain with G-Cter in SUMO2). Residues 277–297 (KREGESPTASPHSSATDDLHH) are disordered. At S390 the chain carries Phosphoserine. Positions 485-513 (EDSAVTTFEALKARVRELERQLSRGDRYK) form a coiled coil. Residues 514-522 (CLICMDSYS) form a required for targeting to the cytoplasm region. The RING-type zinc-finger motif lies at 514 to 553 (CLICMDSYSMPLTSIQCWHVHCEECWLRTLGAKKLCPQCY).

In terms of assembly, interacts with SIN3B. Interacts with CTNNB1 (via Armadillo repeats 2-8). Interacts with USP7 (via MATH domain). Post-translationally, auto-ubiquitinated; leads to proteasomal degradation.

The protein resides in the cytoplasm. It carries out the reaction S-ubiquitinyl-[E2 ubiquitin-conjugating enzyme]-L-cysteine + [acceptor protein]-L-lysine = [E2 ubiquitin-conjugating enzyme]-L-cysteine + N(6)-ubiquitinyl-[acceptor protein]-L-lysine.. It participates in protein modification; protein ubiquitination. Its function is as follows. E3 ubiquitin-protein ligase that promotes the ubiquitination and proteasomal degradation of SIN3B. Independently of its E3 ligase activity, acts as a CTNNB1 stabilizer through USP7-mediated deubiquitination of CTNNB1 promoting Wnt signaling. The chain is E3 ubiquitin-protein ligase RNF220 (RNF220) from Bos taurus (Bovine).